Here is a 207-residue protein sequence, read N- to C-terminus: Large ribosomal subunit protein eL13 (207 aa).

The protein belongs to the eukaryotic ribosomal protein eL13 family. As to quaternary structure, component of the 60S large ribosomal subunit (LSU).

Its subcellular location is the cytoplasm. In terms of biological role, component of the ribosome, a large ribonucleoprotein complex responsible for the synthesis of proteins in the cell. The small ribosomal subunit (SSU) binds messenger RNAs (mRNAs) and translates the encoded message by selecting cognate aminoacyl-transfer RNA (tRNA) molecules. The large subunit (LSU) contains the ribosomal catalytic site termed the peptidyl transferase center (PTC), which catalyzes the formation of peptide bonds, thereby polymerizing the amino acids delivered by tRNAs into a polypeptide chain. The nascent polypeptides leave the ribosome through a tunnel in the LSU and interact with protein factors that function in enzymatic processing, targeting, and the membrane insertion of nascent chains at the exit of the ribosomal tunnel. As part of the LSU, it is probably required for its formation and the maturation of rRNAs. This is Large ribosomal subunit protein eL13 (rpl-13) from Caenorhabditis elegans.